The following is a 137-amino-acid chain: Protein apnoia (137 aa).

The next 3 membrane-spanning stretches (helical) occupy residues 7–27, 55–75, and 76–96; these read IVFA…QQQA, LVPG…LTVV, and SIKG…QMLS.

As to quaternary structure, interacts with crb.

It localises to the apical cell membrane. In terms of biological role, transmembrane protein that plays a key role in trachea development by regulating crb localization and maintenance at the apical cell membrane. Required for anisotropic apical surface expansion important for tracheal tube elongation and lumen stability at larval stages. This chain is Protein apnoia, found in Drosophila melanogaster (Fruit fly).